The following is a 194-amino-acid chain: WASH complex subunit 3 (194 aa).

N-acetylmethionine is present on Met1. Residues 46-74 are a coiled coil; sequence TVCEEKLADLSLRIQQIETTLNILDAKLS. Disordered stretches follow at residues 93–121 and 159–194; these read SVTN…QESE and EGLD…SFSD. Positions 103–121 are enriched in polar residues; that stretch reads TSEQPQQNSTQDSGLQESE.

It belongs to the CCDC53 family. In terms of assembly, component of the WASH core complex also described as WASH regulatory complex (SHRC) composed of WASH (WASHC1, WASH2P or WASH3P), WASHC2 (WASHC2A or WASHC2C), WASHC3, WASHC4 and WASHC5. The WASH core complex associates via WASHC2 with the F-actin-capping protein dimer (formed by CAPZA1, CAPZA2 or CAPZA3 and CAPZB) in a transient or substoichiometric manner which was initially described as WASH complex.

The protein localises to the early endosome. In terms of biological role, acts as a component of the WASH core complex that functions as a nucleation-promoting factor (NPF) at the surface of endosomes, where it recruits and activates the Arp2/3 complex to induce actin polymerization, playing a key role in the fission of tubules that serve as transport intermediates during endosome sorting. In Homo sapiens (Human), this protein is WASH complex subunit 3.